The following is a 69-amino-acid chain: Large ribosomal subunit protein bL31 (69 aa).

Belongs to the bacterial ribosomal protein bL31 family. Type A subfamily. As to quaternary structure, part of the 50S ribosomal subunit.

Functionally, binds the 23S rRNA. This chain is Large ribosomal subunit protein bL31, found in Mycoplasmopsis pulmonis (strain UAB CTIP) (Mycoplasma pulmonis).